Consider the following 471-residue polypeptide: Ribulose bisphosphate carboxylase large chain (471 aa).

Substrate is bound by residues asparagine 115 and threonine 165. The active-site Proton acceptor is lysine 167. Lysine 169 lines the substrate pocket. Residues lysine 193, aspartate 195, and glutamate 196 each contribute to the Mg(2+) site. At lysine 193 the chain carries N6-carboxylysine. Histidine 286 (proton acceptor) is an active-site residue. The substrate site is built by arginine 287, histidine 319, and serine 371.

The protein belongs to the RuBisCO large chain family. Type I subfamily. In terms of assembly, heterohexadecamer of 8 large chains and 8 small chains. The cofactor is Mg(2+).

The protein localises to the carboxysome. It catalyses the reaction 2 (2R)-3-phosphoglycerate + 2 H(+) = D-ribulose 1,5-bisphosphate + CO2 + H2O. It carries out the reaction D-ribulose 1,5-bisphosphate + O2 = 2-phosphoglycolate + (2R)-3-phosphoglycerate + 2 H(+). RuBisCO catalyzes two reactions: the carboxylation of D-ribulose 1,5-bisphosphate, the primary event in carbon dioxide fixation, as well as the oxidative fragmentation of the pentose substrate in the photorespiration process. Both reactions occur simultaneously and in competition at the same active site. In Prochlorococcus marinus (strain MIT 9515), this protein is Ribulose bisphosphate carboxylase large chain.